The chain runs to 616 residues: ATP-dependent zinc metalloprotease FtsH (616 aa).

Residues 1 to 8 (MRNLFKTA) lie on the Cytoplasmic side of the membrane. A helical membrane pass occupies residues 9–29 (TIYILIALVILLLVDIFSGGL). Topologically, residues 30–114 (SYNQFFSNLS…VTKEPPQVPW (85 aa)) are extracellular. A helical membrane pass occupies residues 115–135 (WLSTFLPMLIFAGLMIFVWIF). Topologically, residues 136 to 616 (MLQQTQGGGS…VFEDAQPQLV (481 aa)) are cytoplasmic. 208–215 (GPPGTGKT) lines the ATP pocket. Residue histidine 430 participates in Zn(2+) binding. The active site involves glutamate 431. 2 residues coordinate Zn(2+): histidine 434 and aspartate 506.

This sequence in the central section; belongs to the AAA ATPase family. In the C-terminal section; belongs to the peptidase M41 family. Homohexamer. The cofactor is Zn(2+).

It is found in the cell membrane. In terms of biological role, acts as a processive, ATP-dependent zinc metallopeptidase for both cytoplasmic and membrane proteins. Plays a role in the quality control of integral membrane proteins. In Caldicellulosiruptor bescii (strain ATCC BAA-1888 / DSM 6725 / KCTC 15123 / Z-1320) (Anaerocellum thermophilum), this protein is ATP-dependent zinc metalloprotease FtsH.